The primary structure comprises 195 residues: dITP/XTP pyrophosphatase (195 aa).

Substrate is bound at residue 8 to 13; that stretch reads SNNQGK. 2 residues coordinate Mg(2+): glutamate 39 and aspartate 68. Catalysis depends on aspartate 68, which acts as the Proton acceptor. Residues serine 69, 149 to 152, lysine 172, and 177 to 178 contribute to the substrate site; these read FGYD and HR.

It belongs to the HAM1 NTPase family. In terms of assembly, homodimer. The cofactor is Mg(2+).

The catalysed reaction is XTP + H2O = XMP + diphosphate + H(+). The enzyme catalyses dITP + H2O = dIMP + diphosphate + H(+). It carries out the reaction ITP + H2O = IMP + diphosphate + H(+). Pyrophosphatase that catalyzes the hydrolysis of nucleoside triphosphates to their monophosphate derivatives, with a high preference for the non-canonical purine nucleotides XTP (xanthosine triphosphate), dITP (deoxyinosine triphosphate) and ITP. Seems to function as a house-cleaning enzyme that removes non-canonical purine nucleotides from the nucleotide pool, thus preventing their incorporation into DNA/RNA and avoiding chromosomal lesions. The chain is dITP/XTP pyrophosphatase from Staphylococcus aureus (strain MRSA252).